The chain runs to 576 residues: Arginine--tRNA ligase (576 aa).

Positions 126–136 (ANPTGPMHIGH) match the 'HIGH' region motif.

Belongs to the class-I aminoacyl-tRNA synthetase family. Monomer.

It is found in the cytoplasm. It catalyses the reaction tRNA(Arg) + L-arginine + ATP = L-arginyl-tRNA(Arg) + AMP + diphosphate. The sequence is that of Arginine--tRNA ligase (argS) from Rickettsia prowazekii (strain Madrid E).